The following is a 326-amino-acid chain: Glycerol-3-phosphate dehydrogenase [NAD(P)+] (326 aa).

Tryptophan 13, arginine 33, and lysine 107 together coordinate NADPH. Lysine 107, glycine 135, and serine 137 together coordinate sn-glycerol 3-phosphate. Residue alanine 139 coordinates NADPH. Positions 190, 243, 253, 254, and 255 each coordinate sn-glycerol 3-phosphate. Lysine 190 acts as the Proton acceptor in catalysis. Residue arginine 254 coordinates NADPH. NADPH contacts are provided by leucine 273 and glutamate 275.

Belongs to the NAD-dependent glycerol-3-phosphate dehydrogenase family.

The protein localises to the cytoplasm. It catalyses the reaction sn-glycerol 3-phosphate + NAD(+) = dihydroxyacetone phosphate + NADH + H(+). It carries out the reaction sn-glycerol 3-phosphate + NADP(+) = dihydroxyacetone phosphate + NADPH + H(+). The protein operates within membrane lipid metabolism; glycerophospholipid metabolism. In terms of biological role, catalyzes the reduction of the glycolytic intermediate dihydroxyacetone phosphate (DHAP) to sn-glycerol 3-phosphate (G3P), the key precursor for phospholipid synthesis. This chain is Glycerol-3-phosphate dehydrogenase [NAD(P)+], found in Brucella ovis (strain ATCC 25840 / 63/290 / NCTC 10512).